The chain runs to 230 residues: Protein GrpE (230 aa).

Disordered stretches follow at residues 1 to 28 (MADEKNKPENPDLDQRDINNPRDREALK) and 209 to 230 (GVSKGGPKVSAENGASTSEDNA). A compositionally biased stretch (polar residues) spans 221–230 (NGASTSEDNA).

The protein belongs to the GrpE family. Homodimer.

The protein localises to the cytoplasm. Functionally, participates actively in the response to hyperosmotic and heat shock by preventing the aggregation of stress-denatured proteins, in association with DnaK and GrpE. It is the nucleotide exchange factor for DnaK and may function as a thermosensor. Unfolded proteins bind initially to DnaJ; upon interaction with the DnaJ-bound protein, DnaK hydrolyzes its bound ATP, resulting in the formation of a stable complex. GrpE releases ADP from DnaK; ATP binding to DnaK triggers the release of the substrate protein, thus completing the reaction cycle. Several rounds of ATP-dependent interactions between DnaJ, DnaK and GrpE are required for fully efficient folding. The chain is Protein GrpE from Brucella ovis (strain ATCC 25840 / 63/290 / NCTC 10512).